Reading from the N-terminus, the 116-residue chain is MINLIITLIINTALSTIIVLIAFWLPQLYLYLEKSSPYECGFDPLGSARLPFSMKFFLIAITFLLFDLEIALLLPLPWAMQLPTPNLTLILAYCLIILLTAGLAYEWIQKGLEWSE.

3 helical membrane-spanning segments follow: residues 4–24 (LIIT…IAFW), 56–76 (FFLI…LLPL), and 88–108 (TLIL…YEWI).

The protein belongs to the complex I subunit 3 family. Core subunit of respiratory chain NADH dehydrogenase (Complex I) which is composed of 45 different subunits. Interacts with TMEM186. Interacts with TMEM242.

It localises to the mitochondrion inner membrane. It carries out the reaction a ubiquinone + NADH + 5 H(+)(in) = a ubiquinol + NAD(+) + 4 H(+)(out). Functionally, core subunit of the mitochondrial membrane respiratory chain NADH dehydrogenase (Complex I) which catalyzes electron transfer from NADH through the respiratory chain, using ubiquinone as an electron acceptor. Essential for the catalytic activity of complex I. The protein is NADH-ubiquinone oxidoreductase chain 3 of Osphranter robustus (Wallaroo).